Consider the following 364-residue polypeptide: Aminomethyltransferase (364 aa).

Belongs to the GcvT family. As to quaternary structure, the glycine cleavage system is composed of four proteins: P, T, L and H.

The enzyme catalyses N(6)-[(R)-S(8)-aminomethyldihydrolipoyl]-L-lysyl-[protein] + (6S)-5,6,7,8-tetrahydrofolate = N(6)-[(R)-dihydrolipoyl]-L-lysyl-[protein] + (6R)-5,10-methylene-5,6,7,8-tetrahydrofolate + NH4(+). In terms of biological role, the glycine cleavage system catalyzes the degradation of glycine. The protein is Aminomethyltransferase of Geobacillus kaustophilus (strain HTA426).